Reading from the N-terminus, the 96-residue chain is RNA-binding protein Hfq (96 aa).

Residues Asp9–Val68 form the Sm domain. The interval Ala65–Glu96 is disordered. Positions His70–Glu96 are enriched in low complexity.

Belongs to the Hfq family. Homohexamer.

In terms of biological role, RNA chaperone that binds small regulatory RNA (sRNAs) and mRNAs to facilitate mRNA translational regulation in response to envelope stress, environmental stress and changes in metabolite concentrations. Also binds with high specificity to tRNAs. The chain is RNA-binding protein Hfq from Mannheimia succiniciproducens (strain KCTC 0769BP / MBEL55E).